Consider the following 267-residue polypeptide: MTEYNWNERHIITFPEEILALSTKDLHVYYGEKEAIKGIDMQFKKKKITALIGPSGCGKSTFLRSLNRMNDTIDIAKVTGQILFEGIDVNAANINVYEMRKHIGMVFQRPNPFAKSIYKNITFAYERAGVKDKQFLDDIVETSLKQAALWEQVKDDLHKSAFTLSGGQQQRLCIARAIAVKPDILLMDEPASALDPIATMQLEETMSELKENYTIIIVTHNMQQAARASDYTAFFYLGDLIEYDKTNNIFQNAKLQSTSDYVSGHFG.

The ABC transporter domain maps to 21–262; it reads LSTKDLHVYY…AKLQSTSDYV (242 aa). Residue 53–60 participates in ATP binding; sequence GPSGCGKS.

Belongs to the ABC transporter superfamily. Phosphate importer (TC 3.A.1.7) family. In terms of assembly, the complex is composed of two ATP-binding proteins (PstB), two transmembrane proteins (PstC and PstA) and a solute-binding protein (PstS).

The protein localises to the cell membrane. It carries out the reaction phosphate(out) + ATP + H2O = ADP + 2 phosphate(in) + H(+). Functionally, part of the ABC transporter complex PstSACB involved in phosphate import. Responsible for energy coupling to the transport system. This chain is Phosphate import ATP-binding protein PstB 2, found in Streptococcus mutans serotype c (strain ATCC 700610 / UA159).